The primary structure comprises 421 residues: Gamma-glutamyl phosphate reductase (421 aa).

The protein belongs to the gamma-glutamyl phosphate reductase family.

Its subcellular location is the cytoplasm. The enzyme catalyses L-glutamate 5-semialdehyde + phosphate + NADP(+) = L-glutamyl 5-phosphate + NADPH + H(+). It participates in amino-acid biosynthesis; L-proline biosynthesis; L-glutamate 5-semialdehyde from L-glutamate: step 2/2. Its function is as follows. Catalyzes the NADPH-dependent reduction of L-glutamate 5-phosphate into L-glutamate 5-semialdehyde and phosphate. The product spontaneously undergoes cyclization to form 1-pyrroline-5-carboxylate. In Bordetella petrii (strain ATCC BAA-461 / DSM 12804 / CCUG 43448), this protein is Gamma-glutamyl phosphate reductase.